Reading from the N-terminus, the 172-residue chain is uncharacterized protein (172 aa).

An N-terminal signal peptide occupies residues 1 to 29; it reads MKKKQVMLALTAAAGLGLTALHSAPAAKA. 2 SH3b domains span residues 42-105 and 112-172; these read SDTY…MKTA and KQTA…LQMR.

This is an uncharacterized protein from Bacillus subtilis (strain 168).